Here is a 449-residue protein sequence, read N- to C-terminus: SVGFKAGVKDYKLTYYTPDYETKDTDILAAFRVTPQPGVPPEEAGAAVAAESSTGTWTTVWTDGLTSLDRYKGRCYHIEAVVGEDNQYIAYVAYPLDLFEEGSVTNMLTSIVGNVFGFKALRALRLEDLRIPPAYSKTFQGPPHGIQVERDKLNKYGRPLLGCTIKPKLGLSAKNYGRAVYECLRGGLDFTKDDENVNSQPFMRWRDRFVFCAEALYKAQAETGEIKGHYLNATAGTCEEMMKRAVFARELGAPIVMHDYLTGGFTANTSLAHYCRDNGLLLHIHRAMHAVIDRQKNHGMHFRVLAKALRMSGGDHIHGGTVVGKLEGEREITLGFVDLLRDDYIEKDRSRGIFFTQDWVSMPGVIPVASGGIHVWHMPALTEIFGDDSVLQFGGGTLGHPWGNAPGAVANRVALEACVQARNEGRDLAREGNEIIREASKWSPELAAA.

Lys5 bears the N6,N6,N6-trimethyllysine mark. Substrate contacts are provided by Asn114 and Thr164. Lys166 acts as the Proton acceptor in catalysis. Lys168 is a substrate binding site. Lys192, Asp194, and Glu195 together coordinate Mg(2+). Lys192 carries the N6-carboxylysine modification. His285 serves as the catalytic Proton acceptor. Residues Arg286, His318, and Ser370 each contribute to the substrate site.

Belongs to the RuBisCO large chain family. Type I subfamily. In terms of assembly, heterohexadecamer of 8 large chains and 8 small chains; disulfide-linked. The disulfide link is formed within the large subunit homodimers. Requires Mg(2+) as cofactor. In terms of processing, the disulfide bond which can form in the large chain dimeric partners within the hexadecamer appears to be associated with oxidative stress and protein turnover.

The protein localises to the plastid. It is found in the chloroplast. The enzyme catalyses 2 (2R)-3-phosphoglycerate + 2 H(+) = D-ribulose 1,5-bisphosphate + CO2 + H2O. The catalysed reaction is D-ribulose 1,5-bisphosphate + O2 = 2-phosphoglycolate + (2R)-3-phosphoglycerate + 2 H(+). In terms of biological role, ruBisCO catalyzes two reactions: the carboxylation of D-ribulose 1,5-bisphosphate, the primary event in carbon dioxide fixation, as well as the oxidative fragmentation of the pentose substrate in the photorespiration process. Both reactions occur simultaneously and in competition at the same active site. The sequence is that of Ribulose bisphosphate carboxylase large chain from Zamioculcas zamiifolia (Aroid palm).